A 300-amino-acid chain; its full sequence is Protoheme IX farnesyltransferase 1 (300 aa).

The next 8 membrane-spanning stretches (helical) occupy residues 28–48 (VVALMLLTVLVGMCLAVPGAV), 50–70 (VQPLIAGLVGIGMMAGAAAAY), 106–126 (AMAILGFALLYWAVNPLTAWL), 150–170 (IVVGGLAGAMPPLLGWTAITG), 176–196 (ALLLVIIIFAWTPPHFWALAI), 222–242 (CIMLYTVLLALACLYPVLVGM), 243–263 (CGPLYLVGSTLLSCGFIYKAW), and 280–300 (FSIYHLMLLFLLLLVDHYLWS).

It belongs to the UbiA prenyltransferase family. Protoheme IX farnesyltransferase subfamily.

Its subcellular location is the cell inner membrane. The catalysed reaction is heme b + (2E,6E)-farnesyl diphosphate + H2O = Fe(II)-heme o + diphosphate. The protein operates within porphyrin-containing compound metabolism; heme O biosynthesis; heme O from protoheme: step 1/1. In terms of biological role, converts heme B (protoheme IX) to heme O by substitution of the vinyl group on carbon 2 of heme B porphyrin ring with a hydroxyethyl farnesyl side group. The sequence is that of Protoheme IX farnesyltransferase 1 from Shewanella loihica (strain ATCC BAA-1088 / PV-4).